The sequence spans 380 residues: Putative F-box/kelch-repeat protein At2g44030 (380 aa).

In terms of domain architecture, F-box spans 16 to 66; sequence PKSFLSLPYDVVFNCLSRVSRTHDPILSLVSKSFRSLLALPDLEAERFRIL. 2 Kelch repeats span residues 123 to 170 and 172 to 219; these read EIYL…VIDG and INVY…ALIK.

The protein is Putative F-box/kelch-repeat protein At2g44030 of Arabidopsis thaliana (Mouse-ear cress).